Here is a 460-residue protein sequence, read N- to C-terminus: Phosphomethylpyrimidine synthase (460 aa).

Residues Asn80, Met109, Tyr138, His174, Ser194–Gly196, Asp235–Arg238, and Glu274 contribute to the substrate site. Zn(2+) is bound at residue His278. Tyr301 is a binding site for substrate. Residue His342 coordinates Zn(2+). Positions 422, 425, and 430 each coordinate [4Fe-4S] cluster.

It belongs to the ThiC family. In terms of assembly, homodimer. The cofactor is [4Fe-4S] cluster.

It carries out the reaction 5-amino-1-(5-phospho-beta-D-ribosyl)imidazole + S-adenosyl-L-methionine = 4-amino-2-methyl-5-(phosphooxymethyl)pyrimidine + CO + 5'-deoxyadenosine + formate + L-methionine + 3 H(+). Its pathway is cofactor biosynthesis; thiamine diphosphate biosynthesis. In terms of biological role, catalyzes the synthesis of the hydroxymethylpyrimidine phosphate (HMP-P) moiety of thiamine from aminoimidazole ribotide (AIR) in a radical S-adenosyl-L-methionine (SAM)-dependent reaction. The protein is Phosphomethylpyrimidine synthase of Sulfurimonas denitrificans (strain ATCC 33889 / DSM 1251) (Thiomicrospira denitrificans (strain ATCC 33889 / DSM 1251)).